Consider the following 415-residue polypeptide: tRNA(Met) cytidine acetate ligase (415 aa).

Residues 7-20 (IVEY…HLYH), G102, N165, and 190-191 (RI) contribute to the ATP site.

Belongs to the TmcAL family.

It is found in the cytoplasm. It carries out the reaction cytidine(34) in elongator tRNA(Met) + acetate + ATP = N(4)-acetylcytidine(34) in elongator tRNA(Met) + AMP + diphosphate. Functionally, catalyzes the formation of N(4)-acetylcytidine (ac(4)C) at the wobble position of elongator tRNA(Met), using acetate and ATP as substrates. First activates an acetate ion to form acetyladenylate (Ac-AMP) and then transfers the acetyl group to tRNA to form ac(4)C34. This is tRNA(Met) cytidine acetate ligase from Acetivibrio thermocellus (strain ATCC 27405 / DSM 1237 / JCM 9322 / NBRC 103400 / NCIMB 10682 / NRRL B-4536 / VPI 7372) (Clostridium thermocellum).